The chain runs to 573 residues: BICD family-like cargo adapter 1 (573 aa).

Positions 67-97 (ERPSDPGEHPQAEPGSLAEGAGPQPPPSQDP) are disordered. Residues 68 to 77 (RPSDPGEHPQ) show a composition bias toward basic and acidic residues. The CC1 box signature appears at 113-117 (AARLG). A coiled-coil region spans residues 118 to 376 (KALLERNQDM…QLWEAYCQVR (259 aa)). The interval 386-412 (DSADSAVSTDSSMDESSETSSAKDVPA) is disordered. The segment covering 387-396 (SADSAVSTDS) has biased composition (low complexity). Residues 440–525 (LSVEMTALKE…LEAWQDDMHR (86 aa)) adopt a coiled-coil conformation.

Belongs to the BICDR family. Part of a tripartite complex with dynein and dynactin, acts an adapter linking the dynein motor complex and dynactin. Interacts with KIF1C. Interacts with RAB6A and RAB6B; interaction is specific to Rab6.

Its subcellular location is the cytoplasm. The protein localises to the cytoskeleton. The protein resides in the microtubule organizing center. It localises to the centrosome. Functionally, acts as an adapter protein linking the dynein motor complex to various cargos and converts dynein from a non-processive to a highly processive motor in the presence of dynactin. Facilitates the interaction between dynein and dynactin and activates dynein processivity (the ability to move along a microtubule for a long distance without falling off the track). Predominantly recruits 2 dyneins, which increases both the force and speed of the microtubule motor. Component of secretory vesicle machinery in developing neurons that acts as a regulator of neurite outgrowth. Regulates the secretory vesicle transport by controlling the accumulation of Rab6-containing secretory vesicles in the pericentrosomal region restricting anterograde secretory transport during the early phase of neuronal differentiation, thereby inhibiting neuritogenesis. This Homo sapiens (Human) protein is BICD family-like cargo adapter 1 (BICDL1).